The chain runs to 413 residues: Synaptosomal-associated protein 47 (413 aa).

The t-SNARE coiled-coil homology 1 domain occupies 109 to 171 (AANIPSHVTR…DVADRLLTEL (63 aa)). A disordered region spans residues 321–342 (RHAASRPKGCTPHRELPTGGQE). The t-SNARE coiled-coil homology 2 domain occupies 350–412 (KNLPLFSEGE…DKQNRRMRKL (63 aa)).

The protein belongs to the SVAP1 family. In terms of assembly, associates with the BLOC-1 complex. Interacts with BLOC1S6. Forms a complex containing SNAP47, VAMP2 and STX1A. Ubiquitously expressed with the most abundant expression in the brain. In brain, most highly expressed in the glomerular layer of the olfactory bulb, the cortex, striatum, hippocampus, and colliculi (at protein level).

Its subcellular location is the endomembrane system. The protein localises to the cytoplasm. The protein resides in the perinuclear region. Functionally, may play a role in intracellular membrane fusion. The protein is Synaptosomal-associated protein 47 (Snap47) of Mus musculus (Mouse).